Here is a 192-residue protein sequence, read N- to C-terminus: Acetyltransferase PA3944 (192 aa).

The N-acetyltransferase domain maps to 18-187 (LLLRAWRDSD…RHILYRVDAA (170 aa)). CoA-binding positions include 105-107 (WRL), Gly-113, Asn-145, and 150-152 (GLM).

Catalyzes the transfer of an acetyl group from acetyl coenzyme A (AcCoA) to an acceptor substrate and releases both CoA and the acetylated product. It prefers the peptide Asp-Phe methyl ester (or aspartame) and the peptide antibiotics polymyxin B and colistin. Other substrates like dopamine, serotonin, puromycin, chloramphenicol, D-glucosamine, glycine and N-alpha-acetyl-L-glutamine are used and displayed lower activity. This is Acetyltransferase PA3944 from Pseudomonas aeruginosa (strain ATCC 15692 / DSM 22644 / CIP 104116 / JCM 14847 / LMG 12228 / 1C / PRS 101 / PAO1).